A 198-amino-acid chain; its full sequence is FMN-dependent NADH:quinone oxidoreductase (198 aa).

96-99 contacts FMN; that stretch reads MYNF.

The protein belongs to the azoreductase type 1 family. In terms of assembly, homodimer. FMN serves as cofactor.

The catalysed reaction is 2 a quinone + NADH + H(+) = 2 a 1,4-benzosemiquinone + NAD(+). It carries out the reaction N,N-dimethyl-1,4-phenylenediamine + anthranilate + 2 NAD(+) = 2-(4-dimethylaminophenyl)diazenylbenzoate + 2 NADH + 2 H(+). Functionally, quinone reductase that provides resistance to thiol-specific stress caused by electrophilic quinones. Its function is as follows. Also exhibits azoreductase activity. Catalyzes the reductive cleavage of the azo bond in aromatic azo compounds to the corresponding amines. The chain is FMN-dependent NADH:quinone oxidoreductase from Burkholderia thailandensis (strain ATCC 700388 / DSM 13276 / CCUG 48851 / CIP 106301 / E264).